The chain runs to 315 residues: Probable cell division protein WhiA (315 aa).

Residues 274-308 constitute a DNA-binding region (H-T-H motif); the sequence is SLKNLGELIPGGPISKSGINHRLRKLNEIAEKIRA.

This sequence belongs to the WhiA family.

Involved in cell division and chromosome segregation. This Ligilactobacillus salivarius (strain UCC118) (Lactobacillus salivarius) protein is Probable cell division protein WhiA.